The sequence spans 109 residues: Spermidine export protein MdtI (109 aa).

The next 4 membrane-spanning stretches (helical) occupy residues tryptophan 6–leucine 26, isoleucine 36–valine 56, alanine 64–phenylalanine 84, and leucine 88–leucine 108.

It belongs to the drug/metabolite transporter (DMT) superfamily. Small multidrug resistance (SMR) (TC 2.A.7.1) family. MdtI subfamily. Forms a complex with MdtJ.

It localises to the cell inner membrane. In terms of biological role, catalyzes the excretion of spermidine. The chain is Spermidine export protein MdtI from Klebsiella pneumoniae subsp. pneumoniae (strain ATCC 700721 / MGH 78578).